A 343-amino-acid chain; its full sequence is Anthranilate phosphoribosyltransferase (343 aa).

Residues glycine 86, 89–90, threonine 94, 96–99, 114–122, and serine 126 each bind 5-phospho-alpha-D-ribose 1-diphosphate; these read GD, NIST, and KHGNRSASG. An anthranilate-binding site is contributed by glycine 86. Position 98 (serine 98) interacts with Mg(2+). Residue asparagine 117 coordinates anthranilate. An anthranilate-binding site is contributed by arginine 172. Residues aspartate 231 and glutamate 232 each contribute to the Mg(2+) site.

Belongs to the anthranilate phosphoribosyltransferase family. As to quaternary structure, homodimer. The cofactor is Mg(2+).

The enzyme catalyses N-(5-phospho-beta-D-ribosyl)anthranilate + diphosphate = 5-phospho-alpha-D-ribose 1-diphosphate + anthranilate. It participates in amino-acid biosynthesis; L-tryptophan biosynthesis; L-tryptophan from chorismate: step 2/5. Catalyzes the transfer of the phosphoribosyl group of 5-phosphorylribose-1-pyrophosphate (PRPP) to anthranilate to yield N-(5'-phosphoribosyl)-anthranilate (PRA). This chain is Anthranilate phosphoribosyltransferase, found in Synechococcus sp. (strain JA-3-3Ab) (Cyanobacteria bacterium Yellowstone A-Prime).